The chain runs to 893 residues: TBC domain-containing protein kinase-like protein (893 aa).

The region spanning 1 to 273 (MFPLKDAEMG…PDQLMKDKVF (273 aa)) is the Protein kinase domain. The Rab-GAP TBC domain maps to 466–651 (DIPPLMRGLT…HLWDTLLLGN (186 aa)). The segment at 710–749 (YRQHAQPPKPSSDSSGGRSSAPYFSAECPDPPKTDLSRES) is disordered. The span at 720–729 (SSDSSGGRSS) shows a compositional bias: low complexity. The 100-residue stretch at 790-889 (SKPKLLVVDI…IKPTGLLTIP (100 aa)) folds into the Rhodanese domain.

It belongs to the protein kinase superfamily. As to quaternary structure, component of the FERRY complex composed of five subunits, TBCK, PPP1R21, FERRY3, CRYZL1 and GATD1 with a ratio of 1:2:1:2:4, respectively.

It is found in the cytoplasm. Its subcellular location is the cytoskeleton. The protein localises to the spindle. It localises to the midbody. The protein resides in the early endosome. Functionally, component of the FERRY complex (Five-subunit Endosomal Rab5 and RNA/ribosome intermediary). The FERRY complex directly interacts with mRNAs and RAB5A, and functions as a RAB5A effector involved in the localization and the distribution of specific mRNAs most likely by mediating their endosomal transport. The complex recruits mRNAs and ribosomes to early endosomes through direct mRNA-interaction. Also involved in the modulation of mTOR signaling and expression of mTOR complex components. Involved in the control of actin-cytoskeleton organization. The polypeptide is TBC domain-containing protein kinase-like protein (Homo sapiens (Human)).